The sequence spans 445 residues: Homogentisate 1,2-dioxygenase (445 aa).

Residue Lys98 is modified to N6-acetyllysine. Fe cation is bound by residues His335, Glu341, and His371. N6-succinyllysine is present on Lys414.

The protein belongs to the homogentisate dioxygenase family. Homohexamer arranged as a dimer of trimers. Fe cation serves as cofactor. In terms of tissue distribution, highest expression in the prostate, small intestine, colon, kidney and liver.

It catalyses the reaction homogentisate + O2 = 4-maleylacetoacetate + H(+). It participates in amino-acid degradation; L-phenylalanine degradation; acetoacetate and fumarate from L-phenylalanine: step 4/6. In terms of biological role, catalyzes the conversion of homogentisate to maleylacetoacetate. This is Homogentisate 1,2-dioxygenase (HGD) from Homo sapiens (Human).